The chain runs to 720 residues: Serrate RNA effector molecule (720 aa).

Disordered regions lie at residues 1–192 (MADV…NPQR), 288–335 (LNKS…FTSD), and 361–380 (ENVLQGSETEKSGREKLHSG). A compositionally biased stretch (low complexity) spans 33 to 47 (SLPQQEQEQDQQQLP). The segment covering 48-76 (LRRERDSRERRDERDIERPPPNRRERDRS) has biased composition (basic and acidic residues). S76, S90, and S92 each carry phosphoserine. Positions 99-115 (DRRHSPPQRRSPPQKRY) are enriched in basic residues. 2 stretches are compositionally biased toward basic and acidic residues: residues 116 to 126 (RRDDNGYDGRR) and 136 to 164 (PDRRFGYDHGGGYDREMGGRPGYGDERPH). A compositionally biased stretch (polar residues) spans 288 to 297 (LNKSGRTSEP). Basic and acidic residues predominate over residues 368–378 (ETEKSGREKLH). The C2H2-type zinc-finger motif lies at 498-523 (YGCGAKGCTKLFHAAEFVYKHLKLKH). Disordered regions lie at residues 543 to 622 (YMND…AFGG) and 666 to 687 (RDPSGPNPPFEGSGRGGPAPFL). Positions 570 to 607 (PSMENRLRDDRGGRRERDGRANGNDRNDRSEDQQRGDN) are enriched in basic and acidic residues. Positions 608–622 (DGGNPGEVGYDAFGG) are enriched in gly residues. S689 carries the post-translational modification Phosphoserine.

It belongs to the ARS2 family. As to quaternary structure, interacts with HYL1. Interacts with RCF3, RS40 and RS41. As to expression, expressed in shoot meristems and in emerging organ primordia throughout development.

The protein localises to the nucleus. Its subcellular location is the nucleus speckle. Its function is as follows. Acts as a mediator between the cap-binding complex (CBC) and both the pre-mRNA splicing and primary microRNAs (miRNAs) processing machinery. Required for proper processing of primary miRNAs to miRNAs, thereby playing a role in RNA-mediated gene silencing (RNAi) by miRNAs. Does not participate in sense post-transcriptional gene silencing. Acts as a regulator of meristem activity and adaxial leaf fate via the miRNA gene-silencing pathway by regulating the expression of PHB and by limiting the competence of shoot tissue to respond to KNOX expression. Its function is however not limited to miRNA-mediated repression of leaf polarity genes, but rather acts as a general regulator of primary microRNAs processing. Also critical for the accumulation of the trans-acting small interfering RNA (ta-siRNA). Required for pre-mRNA splicing. The protein is Serrate RNA effector molecule (SE) of Arabidopsis thaliana (Mouse-ear cress).